The primary structure comprises 848 residues: MITPYFLENFWGNKNSGFYVLYHNMKHGQISSKELSDFIRERATIEEAYSRSMTKLAKTASNFSQLGTFAPVWDVFKQSTEKLAACHMELVRKLQELIKEVQKYVDEQAKNHKKTKEEVASTLEAVHNIQSVSQALLKSKENYINKTLEQERMRKEGAKQGDLDKAGLKVKKATESYKSYVEKYATAKTEFEQRMTETAQKFQGIEEEHILRMQEIIHSYSLSVEETHIQIGEVQQEFVNNMENTSVESLIEKLAESRGTGKERPGPIEFEECNVSIATEGAKPRKRKTFAIPGRRKEKDTDSTESTEVEAVNASNGAPPGFYGAIDLHNANVPQLDDEGFCIRPEVNENDAKENSFYSSSDSEDEDEPRKFHVQIKPVQTNNGTHQHKVTIDELKASIGNISLSPTPAVHMKRNQSNDELARPKIPQPPLNDRFSSNDLLSLDPFGPTSTGSSSSLPQSSVPPPNRPTTPLGTSSIVPPPRPLSRPKLATGKLTGITESGRPFSPPKLLNSSPPPPAAPLARAESFSSLSSNTSLSASNTPTVEDDVFVGKLPTFEKRCETPAGTSRGPSPVTLASQDALPIAVAFTESVNAYFKGADPSKCIVKITGDMTLSFPSGIIKIFTSSPSPAVLSFKLLNASRLEQIMPNQQLLHSDSSQSDTNTKDFWMNMPALTSFLRKSSEQNPAASYYNVDILKYQVCSNGIQSTPLNLVVYWKCSRSTTDLRVDYRYNPEAMQPPAPLTNVQVLVPVNGGVMNMQSLPNAIWNAEQNKSLWKLSDISDKSENEGSGSLRAKFELSEGPSIPATLAVQFFSEGSSLSGVDMELAGSGYRLSLNKKRFATGRYMADC.

The 247-residue stretch at P4 to L250 folds into the F-BAR domain. A coiled-coil region spans residues H87–K114. 2 disordered regions span residues I292–N316 and L404–S526. Residues S405 and S417 each carry the phosphoserine modification. The span at P445–S460 shows a compositional bias: low complexity. An MHD domain is found at A580 to C848.

The protein belongs to the FCHO family. Homodimer.

The protein resides in the membrane. It is found in the clathrin-coated pit. Functionally, may function in an early step of clathrin-mediated endocytosis. The polypeptide is F-BAR domain only protein 2 (fcho2) (Danio rerio (Zebrafish)).